A 320-amino-acid chain; its full sequence is Retron Ec86 reverse transcriptase (320 aa).

The region spanning 34–248 (VETLRLLIYT…SQRKVTGLVI (215 aa)) is the Reverse transcriptase domain. Mg(2+)-binding residues include D119, D197, and D198. Residues 230–320 (KKTCISGPRS…GKNPLNKAKT (91 aa)) are necessary and required for recognition and binding of RNA.

It belongs to the bacterial reverse transcriptase family.

It catalyses the reaction DNA(n) + a 2'-deoxyribonucleoside 5'-triphosphate = DNA(n+1) + diphosphate. Reverse transcriptase (RT) component of antiviral defense system retron Ec86, composed of a non-coding RNA (ncRNA), a ribosyltransferase/DNA-binding protein and this RT. Expression of the 3-gene retron confers protection against bacteriophage T5. At multiplicity of infection (MOI) of 0.02 cultures grow normally when infected with T5 without collapsing, at MOI 2 cultures enter growth stasis. Responsible for synthesis of msDNA (a branched molecule with RNA linked by a 2',5'-phosphodiester bond to ssDNA). The retron transcript serves as primer (from a conserved internal G residue) and template for the reaction, and codes for the RT. Recognizes only its cognate RNA as a primer template. Overexpression of the ncRNA and RT (without the ribosyltransferase), which leads to increased levels of msDNA, is mutagenic in vivo. This may be due to a mismatch in the msDNA stem which binds and sequesters MutS and/or MutL. The polypeptide is Retron Ec86 reverse transcriptase (Escherichia coli).